The chain runs to 296 residues: Polyadenylate-binding protein 2 (296 aa).

The segment at 1 to 102 (MAAVSSAASL…EEEPGELTGD (102 aa)) is disordered. Gly residues-rich tracts occupy residues 19–31 (LRGG…GGQD) and 71–82 (GRGGSGGGGAGG). Positions 84–97 (EELEDEELEEEEPG) are enriched in acidic residues. The stretch at 107-141 (DPELEAIKARVREMEEEAEKLKELQNEVEKQMNMS) forms a coiled coil. The interval 146–296 (NAGPVIMSIE…ARVTSWYTPY (151 aa)) is necessary for homooligomerization. Residues 163 to 240 (RSIYVGNVDY…RQIKVVPKRT (78 aa)) enclose the RRM domain.

As to quaternary structure, monomer and homooligomer. Binds RNA as a monomer and oligomerizes when bound to poly(A).

Its subcellular location is the nucleus. It localises to the cytoplasm. Its function is as follows. Involved in the 3'-end formation of mRNA precursors (pre-mRNA) by the addition of a poly(A) tail of 200-250 nt to the upstream cleavage product. Stimulates poly(A) polymerase (PAPOLA) conferring processivity on the poly(A) tail elongation reaction and also controls the poly(A) tail length. Increases the affinity of poly(A) polymerase for RNA. Binds to poly(A) and to poly(G) with high affinity. May protect the poly(A) tail from degradation. This chain is Polyadenylate-binding protein 2, found in Xenopus tropicalis (Western clawed frog).